A 93-amino-acid chain; its full sequence is MARSLKKGPFVDDHLMKKVLKAKEEKNPKPIKTWSRRSTITPDMIGLTINVHNGRDFVPVYVTERHVGFKLGEFAPTRTFRGHKGSVQKKIGK.

The protein belongs to the universal ribosomal protein uS19 family.

Functionally, protein S19 forms a complex with S13 that binds strongly to the 16S ribosomal RNA. The polypeptide is Small ribosomal subunit protein uS19 (Nautilia profundicola (strain ATCC BAA-1463 / DSM 18972 / AmH)).